We begin with the raw amino-acid sequence, 383 residues long: S-adenosylmethionine synthase (383 aa).

ATP is bound at residue His15. Residue Asp17 coordinates Mg(2+). Glu43 provides a ligand contact to K(+). L-methionine contacts are provided by Glu56 and Gln99. Residues 99–109 form a flexible loop region; sequence QSPDINQGVDR. ATP is bound by residues 164–166, 230–231, Asp239, 245–246, Ala262, and Lys266; these read DAK, RF, and RK. An L-methionine-binding site is contributed by Asp239. An L-methionine-binding site is contributed by Lys270.

The protein belongs to the AdoMet synthase family. As to quaternary structure, homotetramer; dimer of dimers. Mg(2+) serves as cofactor. K(+) is required as a cofactor.

It is found in the cytoplasm. It carries out the reaction L-methionine + ATP + H2O = S-adenosyl-L-methionine + phosphate + diphosphate. The protein operates within amino-acid biosynthesis; S-adenosyl-L-methionine biosynthesis; S-adenosyl-L-methionine from L-methionine: step 1/1. Functionally, catalyzes the formation of S-adenosylmethionine (AdoMet) from methionine and ATP. The overall synthetic reaction is composed of two sequential steps, AdoMet formation and the subsequent tripolyphosphate hydrolysis which occurs prior to release of AdoMet from the enzyme. This chain is S-adenosylmethionine synthase, found in Pectobacterium carotovorum subsp. carotovorum (strain PC1).